The chain runs to 583 residues: Phosphoglucomutase, cytoplasmic (583 aa).

The interval 1–20 is disordered; sequence MATFKVSRVETKPYDGQKPG. Alpha-D-glucose 1,6-bisphosphate is bound by residues Arg25 and Ser124. The Phosphoserine intermediate role is filled by Ser124. Positions 124, 300, 302, and 304 each coordinate Mg(2+). Ser124 bears the Phosphoserine mark. The alpha-D-glucose 1,6-bisphosphate site is built by Asp304, Arg305, Thr368, Glu387, Ser389, and Lys400.

It belongs to the phosphohexose mutase family. Monomer. Mg(2+) serves as cofactor.

The protein localises to the cytoplasm. The catalysed reaction is alpha-D-glucose 1-phosphate = alpha-D-glucose 6-phosphate. The enzyme catalyses O-phospho-L-seryl-[protein] + alpha-D-glucose 1-phosphate = alpha-D-glucose 1,6-bisphosphate + L-seryl-[protein]. It catalyses the reaction alpha-D-glucose 1,6-bisphosphate + L-seryl-[protein] = O-phospho-L-seryl-[protein] + alpha-D-glucose 6-phosphate. In terms of biological role, catalyzes the reversible isomerization of alpha-D-glucose 1-phosphate to alpha-D-glucose 6-phosphate. The mechanism proceeds via the intermediate compound alpha-D-glucose 1,6-bisphosphate. This enzyme participates in both the breakdown and synthesis of glucose. The chain is Phosphoglucomutase, cytoplasmic (PGM1) from Mesembryanthemum crystallinum (Common ice plant).